We begin with the raw amino-acid sequence, 394 residues long: Ceramide glucosyltransferase (394 aa).

At 1–10 (MALLDLAQEG) the chain is on the lumenal side. A helical transmembrane segment spans residues 11–32 (MALFGFVLFVVLWLMHFMSIIY). Residues 33–195 (TRLHLNKKAT…QVYFGTSHPR (163 aa)) lie on the Cytoplasmic side of the membrane. A short sequence motif (D1) is located at residue Asp-92. Position 117 is an N6-acetyllysine (Lys-117). Residue Asp-144 is a short sequence motif, D2. The chain crosses the membrane as a helical span at residues 196–215 (SYISANVTGFKCVTGMSCLM). Residues 216-287 (RKDVLDQAGG…KLRINMLPAT (72 aa)) lie on the Lumenal side of the membrane. Asp-236 is a short sequence motif (D3). Catalysis depends on Asp-236, which acts as the Proton acceptor. The short motif at 272–276 (RMIRW) is the (Q/R)XXRW element. The chain crosses the membrane as a helical span at residues 288–304 (IICEPISECFVASLIIG). Over 305–309 (WAAHH) the chain is Cytoplasmic. A helical membrane pass occupies residues 310-328 (VFRWDIMVFFMCHCLAWFI). Residues 329–348 (FDYIQLRGVQGGTLCFSKLD) lie on the Lumenal side of the membrane. Residues 349-369 (YAVAWFIRESMTIYIFLSALW) form a helical membrane-spanning segment. The Cytoplasmic segment spans residues 370–394 (DPTISWRTGRYRLRCGGTAEEILDV).

This sequence belongs to the glycosyltransferase 2 family. As to quaternary structure, interacts with RTN1; regulates the ceramide glucosyltransferase activity of UGCG.

The protein resides in the golgi apparatus membrane. The enzyme catalyses an N-acylsphing-4-enine + UDP-alpha-D-glucose = a beta-D-glucosyl-(1&lt;-&gt;1')-N-acylsphing-4-enine + UDP + H(+). It catalyses the reaction UDP-alpha-D-xylose + an N-acylsphing-4-enine = a beta-D-xylosyl-(1&lt;-&gt;1')-N-acylsphing-4-enine + UDP + H(+). It carries out the reaction N-(9Z-octadecenoyl)-sphing-4-enine + UDP-alpha-D-xylose = beta-D-xylosyl-(1&lt;-&gt;1')-N-(9Z-octadecenoyl)-sphing-4-enine + UDP + H(+). It participates in lipid metabolism; sphingolipid metabolism. Participates in the initial step of the glucosylceramide-based glycosphingolipid/GSL synthetic pathway at the cytosolic surface of the Golgi. Catalyzes the transfer of glucose from UDP-glucose to ceramide to produce glucosylceramide/GlcCer (such as beta-D-glucosyl-(1&lt;-&gt;1')-N-acylsphing-4-enine). Glucosylceramide is the core component of glycosphingolipids/GSLs, amphipathic molecules consisting of a ceramide lipid moiety embedded in the outer leaflet of the membrane, linked to one of hundreds of different externally oriented oligosaccharide structures. Glycosphingolipids are essential components of membrane microdomains that mediate membrane trafficking and signal transduction. They are implicated in many fundamental cellular processes, including growth, differentiation, migration, morphogenesis, cell-to-cell and cell-to-matrix interactions. They are required for instance in the proper development and functioning of the nervous system. As an example of their role in signal transduction, they regulate the leptin receptor/LEPR in the leptin-mediated signaling pathway. They also play an important role in the establishment of the skin barrier regulating keratinocyte differentiation and the proper assembly of the cornified envelope. The biosynthesis of GSLs is also required for the proper intestinal endocytic uptake of nutritional lipids. Catalyzes the synthesis of xylosylceramide/XylCer (such as beta-D-xylosyl-(1&lt;-&gt;1')-N-acylsphing-4-enine) using UDP-Xyl as xylose donor. The sequence is that of Ceramide glucosyltransferase from Mus musculus (Mouse).